The sequence spans 264 residues: Thymidylate synthase (264 aa).

Position 21 (arginine 21) interacts with dUMP. Histidine 51 contributes to the (6R)-5,10-methylene-5,6,7,8-tetrahydrofolate binding site. 126–127 (RR) lines the dUMP pocket. Cysteine 146 serves as the catalytic Nucleophile. DUMP-binding positions include 166 to 169 (RSCD), asparagine 177, and 207 to 209 (HLY). Position 169 (aspartate 169) interacts with (6R)-5,10-methylene-5,6,7,8-tetrahydrofolate. Residue alanine 263 participates in (6R)-5,10-methylene-5,6,7,8-tetrahydrofolate binding.

Belongs to the thymidylate synthase family. Bacterial-type ThyA subfamily. Homodimer.

The protein resides in the cytoplasm. The catalysed reaction is dUMP + (6R)-5,10-methylene-5,6,7,8-tetrahydrofolate = 7,8-dihydrofolate + dTMP. Its pathway is pyrimidine metabolism; dTTP biosynthesis. Functionally, catalyzes the reductive methylation of 2'-deoxyuridine-5'-monophosphate (dUMP) to 2'-deoxythymidine-5'-monophosphate (dTMP) while utilizing 5,10-methylenetetrahydrofolate (mTHF) as the methyl donor and reductant in the reaction, yielding dihydrofolate (DHF) as a by-product. This enzymatic reaction provides an intracellular de novo source of dTMP, an essential precursor for DNA biosynthesis. This chain is Thymidylate synthase, found in Salmonella paratyphi C (strain RKS4594).